Reading from the N-terminus, the 353-residue chain is uncharacterized protein (353 aa).

An HTH luxR-type domain is found at 18–83; it reads NIEFPCLLSE…TLWRDVFLRF (66 aa). The segment at residues 42–61 is a DNA-binding region (H-T-H motif); it reads VNEISKRRNRSIKTVSCQKM. The EAL domain maps to 98–350; it reads NSSVLPVVSS…AFVRKLLASL (253 aa).

This is an uncharacterized protein from Escherichia coli (strain K12).